Consider the following 156-residue polypeptide: Small ribosomal subunit protein uS7 (156 aa).

It belongs to the universal ribosomal protein uS7 family. Part of the 30S ribosomal subunit. Contacts proteins S9 and S11.

In terms of biological role, one of the primary rRNA binding proteins, it binds directly to 16S rRNA where it nucleates assembly of the head domain of the 30S subunit. Is located at the subunit interface close to the decoding center, probably blocks exit of the E-site tRNA. In Desulfatibacillum aliphaticivorans, this protein is Small ribosomal subunit protein uS7.